A 43-amino-acid polypeptide reads, in one-letter code: Protein PsbN (43 aa).

Residues 7–29 (IVIFVSSLLLGITTYSVYTAFGP) form a helical membrane-spanning segment.

Belongs to the PsbN family.

The protein resides in the plastid. The protein localises to the chloroplast thylakoid membrane. In terms of biological role, may play a role in photosystem I and II biogenesis. The sequence is that of Protein PsbN from Phaeodactylum tricornutum (strain CCAP 1055/1).